Consider the following 206-residue polypeptide: N-(5'-phosphoribosyl)anthranilate isomerase (206 aa).

It belongs to the TrpF family.

The catalysed reaction is N-(5-phospho-beta-D-ribosyl)anthranilate = 1-(2-carboxyphenylamino)-1-deoxy-D-ribulose 5-phosphate. It functions in the pathway amino-acid biosynthesis; L-tryptophan biosynthesis; L-tryptophan from chorismate: step 3/5. The protein is N-(5'-phosphoribosyl)anthranilate isomerase of Pseudomonas savastanoi pv. phaseolicola (strain 1448A / Race 6) (Pseudomonas syringae pv. phaseolicola (strain 1448A / Race 6)).